A 207-amino-acid chain; its full sequence is Pyridoxine/pyridoxamine 5'-phosphate oxidase (207 aa).

FMN is bound by residues R53–K58, Y68–T69, K75, and Q97. K58 provides a ligand contact to substrate. The substrate site is built by Y115, R119, and S123. FMN is bound by residues Q132 to S133 and W177. Substrate is bound at residue R183–H185. R187 provides a ligand contact to FMN.

The protein belongs to the pyridoxamine 5'-phosphate oxidase family. Homodimer. It depends on FMN as a cofactor.

The catalysed reaction is pyridoxamine 5'-phosphate + O2 + H2O = pyridoxal 5'-phosphate + H2O2 + NH4(+). The enzyme catalyses pyridoxine 5'-phosphate + O2 = pyridoxal 5'-phosphate + H2O2. Its pathway is cofactor metabolism; pyridoxal 5'-phosphate salvage; pyridoxal 5'-phosphate from pyridoxamine 5'-phosphate: step 1/1. The protein operates within cofactor metabolism; pyridoxal 5'-phosphate salvage; pyridoxal 5'-phosphate from pyridoxine 5'-phosphate: step 1/1. Functionally, catalyzes the oxidation of either pyridoxine 5'-phosphate (PNP) or pyridoxamine 5'-phosphate (PMP) into pyridoxal 5'-phosphate (PLP). In Bartonella henselae (strain ATCC 49882 / DSM 28221 / CCUG 30454 / Houston 1) (Rochalimaea henselae), this protein is Pyridoxine/pyridoxamine 5'-phosphate oxidase.